The primary structure comprises 301 residues: MTIERDAAANTAKVLSEALPYIRRYVGKTLVIKYGGNAMESEELKTGFARDIVLMKAVGINPVVVHGGGPQIGDLLKRLSIESHFVDGMRVTDAQTMDVVEMVLGGQVNKDIVNLINRHGGSAIGLTGKDAELIRAKKLTVTRQTPEMTTPEIIDIGHVGEVVGINTDLLNLLVKGDFIPVIAPIGVGANGESYNINADLVAGKVAEALKAEKLMLLTNIAGLMDKSGKVLTGLSTQQVDELIADGTIYGGMLPKIRCALEAVQGGVGSSLIIDGRVPNAILLEIFTDTGVGTLISNRKRP.

Substrate-binding positions include 68–69 (GG), Arg90, and Asn195.

This sequence belongs to the acetylglutamate kinase family. ArgB subfamily.

It is found in the cytoplasm. The catalysed reaction is N-acetyl-L-glutamate + ATP = N-acetyl-L-glutamyl 5-phosphate + ADP. The protein operates within amino-acid biosynthesis; L-arginine biosynthesis; N(2)-acetyl-L-ornithine from L-glutamate: step 2/4. In terms of biological role, catalyzes the ATP-dependent phosphorylation of N-acetyl-L-glutamate. The chain is Acetylglutamate kinase from Pseudomonas fluorescens (strain ATCC BAA-477 / NRRL B-23932 / Pf-5).